The following is a 446-amino-acid chain: Divalent metal cation transporter MntH (446 aa).

Transmembrane regions (helical) follow at residues 32-52, 59-79, 107-127, 139-159, 168-188, 205-225, 264-284, 303-323, 355-375, 381-401, and 420-440; these read LAFL…GNWI, AQFG…AMLL, AIIF…AEVI, IPLI…LFIM, AIVG…VYIS, IIAN…TIMP, SIAF…FYGV, PVLG…ALLA, LVTR…FRGN, QLLV…LIPL, and VNIC…YLII.

The protein belongs to the NRAMP family.

The protein localises to the cell membrane. In terms of biological role, h(+)-stimulated, divalent metal cation uptake system. This is Divalent metal cation transporter MntH from Staphylococcus haemolyticus (strain JCSC1435).